A 217-amino-acid polypeptide reads, in one-letter code: Large ribosomal subunit protein eL14 (217 aa).

Residue lysine 79 is modified to N6-acetyllysine. Position 85 is an N6-acetyllysine; alternate (lysine 85). An N6-succinyllysine; alternate modification is found at lysine 85. Lysine 124 is covalently cross-linked (Glycyl lysine isopeptide (Lys-Gly) (interchain with G-Cter in SUMO2)). Serine 139 carries the phosphoserine modification. The tract at residues 162–217 (KVPAKKATGPGKKAAGQKAPAQKAAGQKAAPPAKGQKGQKTPAQKAPAPKAAGKKA) is disordered. A 1-1; approximate repeat occupies 173–177 (KKAAG). Positions 173–192 (KKAAGQKAPAQKAAGQKAAP) are 4 X 5 AA tandem repeats of Q-K-A-[APS]-X. A run of 5 repeats spans residues 178–182 (QKAPA), 183–187 (QKAAG), 188–192 (QKAAP), 195–197 (KGQ), and 198–200 (KGQ). Residues 195–200 (KGQKGQ) are 2 X 3 AA tandem repeats of K-G-Q. Lysine 206 carries the post-translational modification N6-succinyllysine.

Belongs to the eukaryotic ribosomal protein eL14 family. In terms of assembly, component of the large ribosomal subunit.

It localises to the cytoplasm. Component of the large ribosomal subunit. The ribosome is a large ribonucleoprotein complex responsible for the synthesis of proteins in the cell. This is Large ribosomal subunit protein eL14 (Rpl14) from Mus musculus (Mouse).